The primary structure comprises 73 residues: Large ribosomal subunit protein bL31 (73 aa).

Belongs to the bacterial ribosomal protein bL31 family. Type A subfamily. Part of the 50S ribosomal subunit.

Its function is as follows. Binds the 23S rRNA. The polypeptide is Large ribosomal subunit protein bL31 (Ruegeria sp. (strain TM1040) (Silicibacter sp.)).